Consider the following 651-residue polypeptide: p-hydroxybenzoic acid efflux pump subunit AaeB (651 aa).

Transmembrane regions (helical) follow at residues 11 to 31, 41 to 61, 67 to 87, 91 to 111, 119 to 139, 150 to 170, 368 to 388, 405 to 425, 429 to 449, 460 to 480, and 481 to 501; these read FAFK…HLQL, AAIV…SGAI, LRII…VLTI, VLTL…SSLV, FGLA…TPLL, EIVL…PRSI, LFWL…IAVV, FLLG…FIIP, QSML…GIEV, LAST…VSLF, and LDSA…LLLI.

This sequence belongs to the aromatic acid exporter ArAE (TC 2.A.85) family.

It localises to the cell inner membrane. Its function is as follows. Forms an efflux pump with AaeA. Could function as a metabolic relief valve, allowing to eliminate certain compounds when they accumulate to high levels in the cell. This is p-hydroxybenzoic acid efflux pump subunit AaeB from Yersinia enterocolitica serotype O:8 / biotype 1B (strain NCTC 13174 / 8081).